The chain runs to 852 residues: Potassium voltage-gated channel subfamily KQT member 2 (852 aa).

Topologically, residues 1-90 are cytoplasmic; the sequence is MVQKSRNGGV…LYNVLERPRG (90 aa). Residue Ser52 is modified to Phosphoserine; by PKA. Residues 91 to 113 traverse the membrane as a helical segment; that stretch reads WAFIYHAYVFLLVFSCLVLSVFS. At 114 to 123 the chain is on the extracellular side; the sequence is TIKEYEKSSE. The chain crosses the membrane as a helical span at residues 124–145; the sequence is GALYILEIVTIVVFGVEYFVRI. Residues 146–163 are Cytoplasmic-facing; that stretch reads WAAGCCCRYRGWRGRLKF. A helical transmembrane segment spans residues 164–183; sequence ARKPFCVIDIMVLIASIAVL. Residues 184-196 lie on the Extracellular side of the membrane; the sequence is AAGSQGNVFATSA. A helical; Voltage-sensor membrane pass occupies residues 197–215; the sequence is LRSLRFLQILRMIRMDRRG. Arg214 contacts a 1,2-diacyl-sn-glycero-3-phospho-(1D-myo-inositol-4,5-bisphosphate). Topologically, residues 216 to 227 are cytoplasmic; it reads GTWKLLGSVVYA. The interval 222–323 is mediates interaction with SLC5A3; sequence GSVVYAHSKE…SGFALKVQEQ (102 aa). The chain crosses the membrane as a helical span at residues 228–253; that stretch reads HSKELVTAWYIGFLCLILASFLVYLA. Lys230 provides a ligand contact to a 1,2-diacyl-sn-glycero-3-phospho-(1D-myo-inositol-4,5-bisphosphate). Residues 254–263 lie on the Extracellular side of the membrane; the sequence is EKGENDHFDT. The segment at residues 264-276 is an intramembrane region (pore-forming); that stretch reads YADALWWGLITLT. Positions 277–282 match the Selectivity filter motif; the sequence is TIGYGD. Topologically, residues 277–287 are extracellular; that stretch reads TIGYGDKYPQT. The chain crosses the membrane as a helical span at residues 288–314; sequence WNGRLLAATFTLIGVSFFALPAGILGS. Residues 315–852 lie on the Cytoplasmic side of the membrane; that stretch reads GFALKVQEQH…GDVAWAGPRK (538 aa). Positions 317 to 522 are mediates interaction with calmodulin; sequence ALKVQEQHRQ…EDLTPGLKVS (206 aa). Residue Lys327 participates in a 1,2-diacyl-sn-glycero-3-phospho-(1D-myo-inositol-4,5-bisphosphate) binding. The tract at residues 404-469 is disordered; it reads TFRKEPQPEP…SKVPKSWSFG (66 aa). Residues 440–457 are compositionally biased toward polar residues; it reads PQAQTVRRSPSADQSLDD. Ser448, Ser450, Ser454, Ser458, Ser460, and Ser489 each carry phosphoserine. Disordered stretches follow at residues 579 to 601, 643 to 662, and 672 to 718; these read GPTI…EDPS, GAKE…SRDH, and IVRS…DHGS. Residues 583–592 show a composition bias toward basic and acidic residues; the sequence is TDKDRTKGPA. Position 655 is a phosphoserine (Ser655). 2 positions are modified to phosphoserine: Ser781 and Ser783. A disordered region spans residues 818-852; the sequence is ESDTDSDLCTPCGPPPRSATGEGPFGDVAWAGPRK.

It belongs to the potassium channel family. KQT (TC 1.A.1.15) subfamily. Kv7.2/KCNQ2 sub-subfamily. As to quaternary structure, heterotetramer with KCNQ3; forms heterotetrameric M-channel responsible for the M-current. Homotetrameric; forms a functional homotetrameric channel resulting in the expression of a small M-current. Interacts with calmodulin; the interaction is calcium-independent, constitutive and participates in the proper assembly of a functional M-channel. May associate with KCNE2. Interacts with IQCJ-SCHIP1. Interacts (via the pore module) with SLC5A3/SMIT1; forms a coregulatory complex that alters ion selectivity, voltage dependence and gating kinetics of the channel. Interacts with AKAP5; the interaction may help KCNQ2 channel complex to retain calcium-bound calmodulin. KCNQ2/KCNQ3 heteromeric current can be increased by intracellular cyclic AMP, an effect that depends on phosphorylation of Ser-52 in the N-terminal region. Post-translationally, KCNQ2/KCNQ3 are ubiquitinated by NEDD4L. Ubiquitination leads to protein degradation. Degradation induced by NEDD4L is inhibited by USP36. As to expression, expressed in brain and sympathetic ganglia. In brain, expressed in cortex, hippocampus, and cerebellum. In sympathetic ganglia, expressed at lower levels in celiac ganglia and superior mesenteric ganglia than in superior cervical ganglia.

Its subcellular location is the cell membrane. The enzyme catalyses K(+)(in) = K(+)(out). The catalysed reaction is Rb(+)(in) = Rb(+)(out). It catalyses the reaction Cs(+)(in) = Cs(+)(out). It carries out the reaction Na(+)(in) = Na(+)(out). Phosphatidylinositol-4,5-bisphosphate (PIP2) potentiates the activation of KCNQ channels by enhancing the electro-mechanical coupling of the voltage-sensing domain (VSD) and the pore-forming domain (PD). In the closed state of the channel, PIP2 is anchored at the S2-S3 loop; upon channel activation, PIP2 interacts with the S4-S5 linker and is involved in channel gating. Calcium suppresses KCNQ2 and KCNQ2-KCNQ3 channel currents, with calcium-bound calmodulin inducing a change in channel configuration which leads to the reduction of channel affinity for PIP2 and subsequent current suppression. Pore-forming subunit of the voltage-gated potassium (Kv) M-channel which is responsible for the M-current, a key controller of neuronal excitability. M-channel is composed of pore-forming subunits KCNQ2 and KCNQ3 assembled as heterotetramers. The native M-current has a slowly activating and deactivating potassium conductance which plays a critical role in determining the subthreshold electrical excitability of neurons as well as the responsiveness to synaptic inputs. M-channel is selectively permeable in vitro to other cations besides potassium, in decreasing order of affinity K(+) &gt; Rb(+) &gt; Cs(+) &gt; Na(+). M-channel association with SLC5A3/SMIT1 alters channel ion selectivity, increasing Na(+) and Cs(+) permeation relative to K(+). Suppressed by activation of the muscarinic acetylcholine receptor CHRM1. The polypeptide is Potassium voltage-gated channel subfamily KQT member 2 (Rattus norvegicus (Rat)).